We begin with the raw amino-acid sequence, 244 residues long: Putative lipoprotein LprA (244 aa).

The N-terminal stretch at methionine 1–glycine 24 is a signal peptide. Cysteine 25 carries N-palmitoyl cysteine lipidation. Residue cysteine 25 is the site of S-diacylglycerol cysteine attachment.

This sequence belongs to the LppX/LprAFG lipoprotein family.

It is found in the cell membrane. The protein is Putative lipoprotein LprA (lprA) of Mycobacterium bovis (strain ATCC BAA-935 / AF2122/97).